The chain runs to 140 residues: Relaxin-3 (140 aa).

The N-terminal stretch at methionine 1–alanine 26 is a signal peptide. Intrachain disulfides connect cysteine 36/cysteine 127, cysteine 48/cysteine 140, and cysteine 126/cysteine 131. A propeptide spans serine 56–arginine 116 (connecting peptide).

It belongs to the insulin family. As to quaternary structure, heterodimer of a B chain and an A chain linked by two disulfide bonds.

Its subcellular location is the secreted. May play a role in neuropeptide signaling processes. Ligand for LGR7, RXFP3 and RXFP4. This Sus scrofa (Pig) protein is Relaxin-3 (RLN3).